The sequence spans 1350 residues: Nicotinate hydroxylase hnxS (1350 aa).

[2Fe-2S] cluster contacts are provided by C49, C54, C89, C92, C133, and C135. Residues 164-193 (LVGTEEETESDMGAHSGSGDTGSRSSGSCG) are disordered. The span at 180-192 (GSGDTGSRSSGSC) shows a compositional bias: low complexity. The FAD-binding PCMH-type domain occupies 256–445 (YGDAEQAWVK…TKIAVPMPSK (190 aa)). FAD is bound by residues 284–291 (LVTGASEV), 379–383 (CLAGN), D392, and K455. Q793 and F824 together coordinate Mo-molybdopterin. Substrate-binding residues include E828 and R906. Mo-molybdopterin is bound by residues R938 and A1107. Residue E1281 is the Proton acceptor of the active site.

It belongs to the xanthine dehydrogenase family. It depends on [2Fe-2S] cluster as a cofactor. Requires FAD as cofactor. The cofactor is Mo-molybdopterin.

Its activity is regulated as follows. Allopurinol inhibits catalytic activity in a linear fashion. Its function is as follows. Nicotinate hydroxylase, part of the hnx cluster involved in the purine degradation. The nicotinate hydroxylase hnxS accepts nicotinate as a substrate and catalyzes the first step of nicotinate catabolism. HnxS also accepts hypoxanthine, but not xanthine, as a substrate. The major facilitator-type transporters hxnP and hxnZ are probably involved in the uptake of nicotinate-derived metabolites, and the oxidoreductases hxnT and hxnY in the further metabolism of 6-OH nicotinic acid. The chain is Nicotinate hydroxylase hnxS from Emericella nidulans (strain FGSC A4 / ATCC 38163 / CBS 112.46 / NRRL 194 / M139) (Aspergillus nidulans).